The primary structure comprises 180 residues: Adenine phosphoribosyltransferase (180 aa).

Alanine 2 is modified (N-acetylalanine). Phosphoserine is present on residues serine 15 and serine 30. A Phosphotyrosine modification is found at tyrosine 60. Serine 66 bears the Phosphoserine mark. Threonine 135 carries the post-translational modification Phosphothreonine.

The protein belongs to the purine/pyrimidine phosphoribosyltransferase family. Homodimer.

It localises to the cytoplasm. It catalyses the reaction AMP + diphosphate = 5-phospho-alpha-D-ribose 1-diphosphate + adenine. It functions in the pathway purine metabolism; AMP biosynthesis via salvage pathway; AMP from adenine: step 1/1. Catalyzes a salvage reaction resulting in the formation of AMP, that is energically less costly than de novo synthesis. This is Adenine phosphoribosyltransferase from Bos taurus (Bovine).